The following is a 204-amino-acid chain: MTERSPLRVGIGGPVGSGKTALTLNLCRALRNKYNMAVVTNDIYTKEDSNFLTRNEAMTPDRIVGVETGGCPHTAIREDASINLAAIDDLCEKFDGLELIIIESGGDNLAATFSPELSDLTLYVIDVAGGEKIPRKGGPGITKSDLLIINKTDLAPMVGANLDVMEQDAKRMRGEKPFLFSNMKTEDGLTQIIEFIEKQGLFKA.

G13–T20 serves as a coordination point for GTP.

It belongs to the SIMIBI class G3E GTPase family. UreG subfamily. In terms of assembly, homodimer. UreD, UreF and UreG form a complex that acts as a GTP-hydrolysis-dependent molecular chaperone, activating the urease apoprotein by helping to assemble the nickel containing metallocenter of UreC. The UreE protein probably delivers the nickel.

Its subcellular location is the cytoplasm. Functionally, facilitates the functional incorporation of the urease nickel metallocenter. This process requires GTP hydrolysis, probably effectuated by UreG. In Acinetobacter baylyi (strain ATCC 33305 / BD413 / ADP1), this protein is Urease accessory protein UreG.